We begin with the raw amino-acid sequence, 332 residues long: Super small secreted glycoprotein (332 aa).

A signal peptide spans 1-33 (MGSGYQLLQLPRERFRKTSFLVWVIILFQRAIS). The N-linked (GlcNAc...) asparagine; by host glycan is linked to N41. Disulfide bonds link C109-C136 and C122-C148. N-linked (GlcNAc...) asparagine; by host glycans are attached at residues N205, N229, N239, N258, and N269.

Belongs to the filoviruses glycoprotein family.

The protein resides in the secreted. The chain is Super small secreted glycoprotein (GP) from Reston ebolavirus (strain Reston-89) (REBOV).